A 96-amino-acid chain; its full sequence is Large ribosomal subunit protein uL23 (96 aa).

Belongs to the universal ribosomal protein uL23 family. In terms of assembly, part of the 50S ribosomal subunit. Contacts protein L29, and trigger factor when it is bound to the ribosome.

In terms of biological role, one of the early assembly proteins it binds 23S rRNA. One of the proteins that surrounds the polypeptide exit tunnel on the outside of the ribosome. Forms the main docking site for trigger factor binding to the ribosome. The sequence is that of Large ribosomal subunit protein uL23 from Enterococcus faecalis (strain ATCC 700802 / V583).